Here is a 395-residue protein sequence, read N- to C-terminus: Acid ceramidase (395 aa).

The N-terminal stretch at 1–21 (MPGRSRVALVLLAAAVSCAVA) is a signal peptide. An intrachain disulfide couples cysteine 31 to cysteine 340. The Nucleophile role is filled by cysteine 143. N-linked (GlcNAc...) asparagine glycosylation is found at asparagine 195, asparagine 259, asparagine 286, and asparagine 342. An intrachain disulfide couples cysteine 388 to cysteine 392.

This sequence belongs to the acid ceramidase family. As to quaternary structure, heterodimer; disulfide-linked. The heterodimer is composed of the disulfide-linked alpha and beta chains produced by autocatalytic cleavage of the precursor. In terms of processing, N-glycosylated. Proteolytically cleaved into two chains alpha and beta that remain associated via a disulfide bond. Cleavage gives rise to a conformation change that activates the enzyme. The same catalytic Cys residue mediates the autoproteolytic cleavage and subsequent hydrolysis of lipid substrates. The beta chain may undergo an additional C-terminal processing.

It localises to the lysosome. It is found in the secreted. The catalysed reaction is an N-acylsphing-4-enine + H2O = sphing-4-enine + a fatty acid. It catalyses the reaction N-dodecanoylsphing-4-enine + H2O = dodecanoate + sphing-4-enine. The enzyme catalyses N-tetradecanoylsphing-4-enine + H2O = tetradecanoate + sphing-4-enine. It carries out the reaction N-hexadecanoylsphing-4-enine + H2O = sphing-4-enine + hexadecanoate. The catalysed reaction is N-octadecanoylsphing-4-enine + H2O = sphing-4-enine + octadecanoate. It catalyses the reaction N-dodecanoyl-(4R)-hydroxysphinganine + H2O = (4R)-hydroxysphinganine + dodecanoate. The enzyme catalyses N-(dodecanoyl)-sphinganine + H2O = dodecanoate + sphinganine. It carries out the reaction N-(acetyl)-sphing-4-enine + H2O = sphing-4-enine + acetate. The catalysed reaction is N-(hexanoyl)sphing-4-enine + H2O = hexanoate + sphing-4-enine. It catalyses the reaction N-octanoylsphing-4-enine + H2O = octanoate + sphing-4-enine. The enzyme catalyses N-(9Z-octadecenoyl)-sphing-4-enine + H2O = sphing-4-enine + (9Z)-octadecenoate. It carries out the reaction N-dodecanoylethanolamine + H2O = dodecanoate + ethanolamine. It functions in the pathway lipid metabolism; sphingolipid metabolism. In terms of biological role, lysosomal ceramidase that hydrolyzes sphingolipid ceramides into sphingosine and free fatty acids at acidic pH. Ceramides, sphingosine, and its phosphorylated form sphingosine-1-phosphate are bioactive lipids that mediate cellular signaling pathways regulating several biological processes including cell proliferation, apoptosis and differentiation. Has a higher catalytic efficiency towards C12-ceramides versus other ceramides. Also catalyzes the reverse reaction allowing the synthesis of ceramides from fatty acids and sphingosine. For the reverse synthetic reaction, the natural sphingosine D-erythro isomer is more efficiently utilized as a substrate compared to D-erythro-dihydrosphingosine and D-erythro-phytosphingosine, while the fatty acids with chain lengths of 12 or 14 carbons are the most efficiently used. Also has an N-acylethanolamine hydrolase activity. By regulating the levels of ceramides, sphingosine and sphingosine-1-phosphate in the epidermis, mediates the calcium-induced differentiation of epidermal keratinocytes. Also indirectly regulates tumor necrosis factor/TNF-induced apoptosis. By regulating the intracellular balance between ceramides and sphingosine, in adrenocortical cells, probably also acts as a regulator of steroidogenesis. In Pan troglodytes (Chimpanzee), this protein is Acid ceramidase.